Consider the following 451-residue polypeptide: Trigger factor (451 aa).

The region spanning 173-258 (GDRVTVDFVG…LKKVEWAHLP (86 aa)) is the PPIase FKBP-type domain.

It belongs to the FKBP-type PPIase family. Tig subfamily.

The protein resides in the cytoplasm. The enzyme catalyses [protein]-peptidylproline (omega=180) = [protein]-peptidylproline (omega=0). Involved in protein export. Acts as a chaperone by maintaining the newly synthesized protein in an open conformation. Functions as a peptidyl-prolyl cis-trans isomerase. This Cupriavidus taiwanensis (strain DSM 17343 / BCRC 17206 / CCUG 44338 / CIP 107171 / LMG 19424 / R1) (Ralstonia taiwanensis (strain LMG 19424)) protein is Trigger factor.